The primary structure comprises 210 residues: Dephospho-CoA kinase (210 aa).

One can recognise a DPCK domain in the interval 18-210 (RIGITGGIAS…LSYPQVEVLL (193 aa)). 26-31 (ASGKTS) serves as a coordination point for ATP.

This sequence belongs to the CoaE family.

Its subcellular location is the cytoplasm. It catalyses the reaction 3'-dephospho-CoA + ATP = ADP + CoA + H(+). It participates in cofactor biosynthesis; coenzyme A biosynthesis; CoA from (R)-pantothenate: step 5/5. Catalyzes the phosphorylation of the 3'-hydroxyl group of dephosphocoenzyme A to form coenzyme A. This chain is Dephospho-CoA kinase, found in Prochlorococcus marinus (strain SARG / CCMP1375 / SS120).